The primary structure comprises 331 residues: Biotin synthase (331 aa).

The Radical SAM core domain maps to 39-264 (SELQTCYLIS…VFPRSMVRLA (226 aa)). [4Fe-4S] cluster is bound by residues C54, C58, and C61. Positions 98, 130, 190, and 262 each coordinate [2Fe-2S] cluster.

Belongs to the radical SAM superfamily. Biotin synthase family. In terms of assembly, homodimer. The cofactor is [4Fe-4S] cluster. [2Fe-2S] cluster is required as a cofactor.

The catalysed reaction is (4R,5S)-dethiobiotin + (sulfur carrier)-SH + 2 reduced [2Fe-2S]-[ferredoxin] + 2 S-adenosyl-L-methionine = (sulfur carrier)-H + biotin + 2 5'-deoxyadenosine + 2 L-methionine + 2 oxidized [2Fe-2S]-[ferredoxin]. The protein operates within cofactor biosynthesis; biotin biosynthesis; biotin from 7,8-diaminononanoate: step 2/2. Its function is as follows. Catalyzes the conversion of dethiobiotin (DTB) to biotin by the insertion of a sulfur atom into dethiobiotin via a radical-based mechanism. The chain is Biotin synthase from Chlamydia pneumoniae (Chlamydophila pneumoniae).